A 229-amino-acid chain; its full sequence is MSNSLLVCHGLRKIYREAQLETEVLKGVSFAIEPNELVAIVGSSGSGKSTLLHLLGALDEPSDGDVFFKGQKLNSMSANKQAKIRNQEIGFVYQFHHLLADFSAMENVAMPLLIGGMATDKAESKAKSILDMVGLSHRYEHRPSELSGGERQRVAFARALVNNPSIVLADEPTGNLDHKTALEIYDLMCKLNKESGTAFLVVTHDNELAAKLDRCMHMQDGNLVQVEVA.

An ABC transporter domain is found at 9–228 (HGLRKIYREA…QDGNLVQVEV (220 aa)). ATP is bound at residue 42–49 (GSSGSGKS).

This sequence belongs to the ABC transporter superfamily. Lipoprotein translocase (TC 3.A.1.125) family. The complex is composed of two ATP-binding proteins (LolD) and two transmembrane proteins (LolC and LolE).

It localises to the cell inner membrane. Part of the ABC transporter complex LolCDE involved in the translocation of mature outer membrane-directed lipoproteins, from the inner membrane to the periplasmic chaperone, LolA. Responsible for the formation of the LolA-lipoprotein complex in an ATP-dependent manner. The sequence is that of Lipoprotein-releasing system ATP-binding protein LolD from Photobacterium profundum (strain SS9).